The primary structure comprises 1084 residues: TNF receptor-associated factor family protein DDB_G0272098 (1084 aa).

In terms of domain architecture, LIM zinc-binding spans 19–103 (YYCPDCGELL…KNRYYETKNF (85 aa)). 2 consecutive TRAF-type zinc fingers follow at residues 122-190 (KHIK…IDHE) and 191-248 (IHLS…YNMS). Positions 265-321 (IEEQNQDIKELHNFIENHLSKKFIDLDTIVNIQKYLIKNKNQKISQLTEIIKRVDNS) form a coiled coil. Disordered regions lie at residues 348–392 (YKNS…NINE), 490–523 (IRQQ…NTTI), 537–656 (NNNI…KDGL), and 709–897 (SIVE…NDDD). 4 stretches are compositionally biased toward low complexity: residues 349-375 (KNSN…TNEN), 492-509 (QQQQ…QQQQ), 537-549 (NNNI…NNNK), and 556-570 (ITAA…TTST). Positions 489 to 553 (LIRQQQQQQQ…NNNNNKNNDD (65 aa)) form a coiled coil. A compositionally biased stretch (polar residues) spans 571-586 (HTILNGTNNEASMTDI). Over residues 587–637 (NETTSTTTTAETTEATASESTEESNNTAETTTTTTTTTTTITTAAETVNST) the composition is skewed to low complexity. A compositionally biased stretch (basic and acidic residues) spans 644–656 (TSEKVEEKGKDGL). A coiled-coil region spans residues 735-852 (NGNENENENE…NNNNNNNENV (118 aa)). The span at 739–757 (NENENENENENENENENEN) shows a compositional bias: acidic residues. Positions 774 to 785 (SNINTSNDTEPT) are enriched in polar residues. Residues 790–799 (EDIKKNKENE) are compositionally biased toward basic and acidic residues. The span at 809-849 (NNNIKSVEDTNNNNNNNNNNNNNNNNNNNNNNNNNNNNNNN) shows a compositional bias: low complexity. Basic and acidic residues-rich tracts occupy residues 853 to 864 (YDIKKDRNRENV) and 875 to 892 (ENGK…SEDK). The MATH domain occupies 909–1042 (IFRNQILFKD…DNCFIVNLEV (134 aa)). The disordered stretch occupies residues 1056–1084 (LLQKSSPPAATTTTTTSSSSSKTTPKTKR). A compositionally biased stretch (low complexity) spans 1059 to 1084 (KSSPPAATTTTTTSSSSSKTTPKTKR).

The protein belongs to the TNF receptor-associated factor family.

Its subcellular location is the cytoplasm. Its function is as follows. Probable adapter protein and signal transducer that links members of the tumor necrosis factor receptor family to different signaling pathways by association with the receptor cytoplasmic domain and kinases. In Dictyostelium discoideum (Social amoeba), this protein is TNF receptor-associated factor family protein DDB_G0272098.